We begin with the raw amino-acid sequence, 860 residues long: Leucine--tRNA ligase (860 aa).

Positions proline 42 to histidine 52 match the 'HIGH' region motif. A 'KMSKS' region motif is present at residues lysine 619–serine 623. Residue lysine 622 coordinates ATP.

This sequence belongs to the class-I aminoacyl-tRNA synthetase family.

Its subcellular location is the cytoplasm. It carries out the reaction tRNA(Leu) + L-leucine + ATP = L-leucyl-tRNA(Leu) + AMP + diphosphate. The chain is Leucine--tRNA ligase from Histophilus somni (strain 2336) (Haemophilus somnus).